Consider the following 154-residue polypeptide: MAARLCCQLDPARDVLCLRPVSAESCGRPVSGSLGDLSSPSPSAVPAVHGAHLSLRGLPVCAFSSAGPCALRFTSARRMETTVNAHQILPKVLHKRTLGLSAMSTTDLEAYFKDCLFKDWEELGEEIRLKVFVLGGCRHKLVCAPAPCNFFTSA.

Residues 68–117 (PCALRFTSARRMETTVNAHQILPKVLHKRTLGLSAMSTTDLEAYFKDCLF) form a mitochondrial targeting sequence region.

Belongs to the orthohepadnavirus protein X family. In terms of assembly, may form homodimer. May interact with host CEBPA, CFLAR, CREB1, DDB1, E4F1, HBXIP, HSPD1/HSP60, NFKBIA, POLR2E and SMAD4. Interacts with host SMC5-SMC6 complex and induces its degradation. Interacts with host TRPC4AP; leading to prevent ubiquitination of TRPC4AP. Interacts with host PLSCR1; this interaction promotes ubiquitination and degradation of HBx and impairs HBx-mediated cell proliferation. Post-translationally, a fraction may be phosphorylated in insect cells and HepG2 cells, a human hepatoblastoma cell line. Phosphorylated in vitro by host protein kinase C or mitogen-activated protein kinase. N-acetylated in insect cells.

Its subcellular location is the host cytoplasm. It localises to the host nucleus. It is found in the host mitochondrion. In terms of biological role, multifunctional protein that plays a role in silencing host antiviral defenses and promoting viral transcription. Does not seem to be essential for HBV infection. May be directly involved in development of cirrhosis and liver cancer (hepatocellular carcinoma). Most of cytosolic activities involve modulation of cytosolic calcium. The effect on apoptosis is controversial depending on the cell types in which the studies have been conducted. May induce apoptosis by localizing in mitochondria and causing loss of mitochondrial membrane potential. May also modulate apoptosis by binding host CFLAR, a key regulator of the death-inducing signaling complex (DISC). Promotes viral transcription by using the host E3 ubiquitin ligase DDB1 to target the SMC5-SMC6 complex to proteasomal degradation. This host complex would otherwise bind to viral episomal DNA, and prevents its transcription. Moderately stimulates transcription of many different viral and cellular transcription elements. Promoters and enhancers stimulated by HBx contain DNA binding sites for NF-kappa-B, AP-1, AP-2, c-EBP, ATF/CREB, or the calcium-activated factor NF-AT. This is Protein X from Hepatitis B virus genotype E (isolate Chimpanzee/Ch195/1999) (HBV-E).